A 548-amino-acid polypeptide reads, in one-letter code: Sesquiterpene synthase 9 (548 aa).

The Mg(2+) site is built by aspartate 300, aspartate 304, and glutamate 453. Residues 300–304 (DDTFD) carry the DDXXD motif motif.

This sequence belongs to the terpene synthase family. Tpsa subfamily. The cofactor is Mg(2+). Mn(2+) serves as cofactor. Mostly expressed in stem and trichomes, to a lower extent in roots, leaves and flowers and, at low levels, in fruits.

It localises to the cytoplasm. The enzyme catalyses (2E,6E)-farnesyl diphosphate = germacrene C + diphosphate. It carries out the reaction (2E)-geranyl diphosphate = terpinolene + diphosphate. It catalyses the reaction (2E)-geranyl diphosphate = limonene + diphosphate. The catalysed reaction is (2E)-geranyl diphosphate = beta-myrcene + diphosphate. The enzyme catalyses (2Z,6Z)-farnesyl diphosphate = germacrene C + diphosphate. It functions in the pathway secondary metabolite biosynthesis; terpenoid biosynthesis. In terms of biological role, involved in the biosynthesis of germacrene C, one of the most abundant sesquiterpene in the leaf oil of tomato. Produces mainly germacrene C, but also smaller amounts of germacrene A, B and D when used with farnesyl diphosphate (FPP) as substrate; able to use both (2E,6E)-farnesyl diphosphate ((EE)-FPP) and (2Z,6Z)-farnesyl diphosphate ((ZZ)-FPP). No or low activity with geranylgeranyl diphosphate (GGPP). Can act with a low efficiency as a monoterpene synthase with geranyl diphosphate (GPP) as substrate, thus producing beta-myrcene, limonene and terpinolene. The chain is Sesquiterpene synthase 9 from Solanum lycopersicum (Tomato).